The following is a 397-amino-acid chain: Elongation factor Tu (397 aa).

The tr-type G domain occupies 10 to 206; the sequence is KPHVNIGTIG…AVDQNIPEPQ (197 aa). The G1 stretch occupies residues 19–26; it reads GHIDHGKT. 19 to 26 serves as a coordination point for GTP; that stretch reads GHIDHGKT. Threonine 26 lines the Mg(2+) pocket. Residues 62 to 66 are G2; sequence GITIS. Positions 83–86 are G3; it reads DCPG. Residues 83-87 and 138-141 contribute to the GTP site; these read DCPGH and NKSD. A G4 region spans residues 138 to 141; sequence NKSD. The segment at 176–178 is G5; sequence SAL.

The protein belongs to the TRAFAC class translation factor GTPase superfamily. Classic translation factor GTPase family. EF-Tu/EF-1A subfamily. Monomer.

The protein localises to the cytoplasm. It carries out the reaction GTP + H2O = GDP + phosphate + H(+). GTP hydrolase that promotes the GTP-dependent binding of aminoacyl-tRNA to the A-site of ribosomes during protein biosynthesis. This chain is Elongation factor Tu, found in Thermobifida fusca (strain YX).